A 284-amino-acid chain; its full sequence is Tropomyosin (284 aa).

Positions 1 to 284 (MEAIKNKMQA…DQTFAELTGY (284 aa)) form a coiled coil.

It belongs to the tropomyosin family. As to quaternary structure, homodimer.

Tropomyosin, in association with the troponin complex, plays a central role in the calcium dependent regulation of muscle contraction. The polypeptide is Tropomyosin (Dermatophagoides pteronyssinus (European house dust mite)).